Reading from the N-terminus, the 314-residue chain is Olfactory receptor 8D4 (314 aa).

The Extracellular segment spans residues 1–25 (MGVKNHSTVTEFLLSGLTEQAELQL). Asn5 carries an N-linked (GlcNAc...) asparagine glycan. Residues 26 to 46 (PLFCLFLGIYTVTVVGNLSMI) form a helical membrane-spanning segment. Residues 47-54 (SIIRLNRQ) are Cytoplasmic-facing. A helical transmembrane segment spans residues 55–75 (LHTPMYYFLSSLSFLDFCYSS). Over 76–99 (VITPKMLSGFLCRDRSISYSGCMI) the chain is Extracellular. A disulfide bridge links Cys97 with Cys189. Residues 100–120 (QLFFFCVCVISECYMLAAMAC) traverse the membrane as a helical segment. Residues 121-139 (DRYVAICSPLLYRVIMSPR) are Cytoplasmic-facing. A helical transmembrane segment spans residues 140 to 160 (VCSLLVAAVFSVGFTDAVIHG). The Extracellular segment spans residues 161–197 (GCILRLSFCGSNIIKHYFCDIVPLIKLSCSSTYIDEL). Residues 198-217 (LIFVIGGFNMVATSLTIIIS) traverse the membrane as a helical segment. The Cytoplasmic portion of the chain corresponds to 218–237 (YAFILTSILRIHSKKGRCKA). The helical transmembrane segment at 238–258 (FSTCSSHLTAVLMFYGSLMSM) threads the bilayer. The Extracellular segment spans residues 259-271 (YLKPASSSSLTQE). Residues 272 to 292 (KVSSVFYTTVILMLNPLIYSL) form a helical membrane-spanning segment. The Cytoplasmic segment spans residues 293–314 (RNNEVRNALMKLLRRKISLSPG).

Belongs to the G-protein coupled receptor 1 family.

The protein resides in the cell membrane. In terms of biological role, odorant receptor. The chain is Olfactory receptor 8D4 (OR8D4) from Homo sapiens (Human).